Consider the following 382-residue polypeptide: D-galactonate dehydratase (382 aa).

Asp-183 contributes to the Mg(2+) binding site. His-185 functions as the Proton donor in the catalytic mechanism. Residues Glu-209 and Glu-235 each coordinate Mg(2+). The active-site Proton acceptor is the His-285.

The protein belongs to the mandelate racemase/muconate lactonizing enzyme family. GalD subfamily. It depends on Mg(2+) as a cofactor.

The enzyme catalyses D-galactonate = 2-dehydro-3-deoxy-D-galactonate + H2O. It participates in carbohydrate acid metabolism; D-galactonate degradation; D-glyceraldehyde 3-phosphate and pyruvate from D-galactonate: step 1/3. Functionally, catalyzes the dehydration of D-galactonate to 2-keto-3-deoxy-D-galactonate. The polypeptide is D-galactonate dehydratase (Salmonella paratyphi A (strain AKU_12601)).